The sequence spans 147 residues: Large ribosomal subunit protein uL16c (147 aa).

A compositionally biased stretch (basic residues) spans 1 to 17; it reads MLSPKRTRFRKQHRGRM. Residues 1-20 are disordered; that stretch reads MLSPKRTRFRKQHRGRMKGI.

Belongs to the universal ribosomal protein uL16 family. As to quaternary structure, part of the 50S ribosomal subunit.

The protein resides in the plastid. The protein localises to the chloroplast. This is Large ribosomal subunit protein uL16c from Ipomoea purpurea (Common morning glory).